Reading from the N-terminus, the 262-residue chain is MNDILAKILAVKAEEVATARQMRSEAELLREAQARQDVRGFAQAIEDKIAQGKAGVIAEIKKASPSKGVLRENFDPAAIAATYAVHGAACLSVLTDVQFFQGSHDNLRRARAACPLPVLRKDFVIDPYQVISARAMGADCVLLIVAALAPSQLRELETLAMELGMDVLVEVHDAKELDIALSLKTPLLGINNRNLRTFETSLQNTLNLLPQIPAGKRVITESGILSPEDVKLMRSHQVHAFLVGEAFMRAEDPGVELARLMG.

It belongs to the TrpC family.

The catalysed reaction is 1-(2-carboxyphenylamino)-1-deoxy-D-ribulose 5-phosphate + H(+) = (1S,2R)-1-C-(indol-3-yl)glycerol 3-phosphate + CO2 + H2O. It functions in the pathway amino-acid biosynthesis; L-tryptophan biosynthesis; L-tryptophan from chorismate: step 4/5. This Bordetella petrii (strain ATCC BAA-461 / DSM 12804 / CCUG 43448) protein is Indole-3-glycerol phosphate synthase.